Reading from the N-terminus, the 169-residue chain is Cilia- and flagella-associated protein 68 (169 aa).

Mn stretches follow at residues 98–109 (TTYDTSYNNRRP) and 139–149 (KSTYMTSYSKP).

The protein belongs to the CFAP68 family. Microtubule inner protein component of sperm flagellar doublet microtubules.

It is found in the cytoplasm. The protein resides in the cytoskeleton. Its subcellular location is the cilium axoneme. It localises to the flagellum axoneme. The protein localises to the nucleus. It is found in the cell projection. The protein resides in the cilium. Functionally, microtubule inner protein (MIP) part of the dynein-decorated doublet microtubules (DMTs) in cilia axoneme, which is required for motile cilia beating. The chain is Cilia- and flagella-associated protein 68 (CFAP68) from Bos taurus (Bovine).